Reading from the N-terminus, the 850-residue chain is Response regulator sskA (850 aa).

2 disordered regions span residues 1-225 (MPDR…GASS) and 419-542 (IPQR…GQSP). The segment covering 7-25 (SQLLKSKLLRRSSTTATTS) has biased composition (low complexity). Residues 117–138 (GANSRQEGSQNGSIQQSPTFTR) show a composition bias toward polar residues. The segment covering 144-163 (QLTEEKDKGKLQSREGDQRG) has biased composition (basic and acidic residues). The span at 177–196 (SDPQYSLTTELANKPSTPQT) shows a compositional bias: polar residues. The segment covering 436 to 445 (HHSEPGEHGE) has biased composition (basic and acidic residues). The span at 477-490 (PSISILTTDSNMAS) shows a compositional bias: polar residues. Residues 492 to 511 (PQPPVAAPQVPTPPGPPPES) are compositionally biased toward pro residues. The Response regulatory domain occupies 558–719 (NVLIVEDNII…WLEQKVTEWG (162 aa)). Residue D607 is modified to 4-aspartylphosphate. The tract at residues 736 to 850 (FADEPQSSSP…DEEQQALDAT (115 aa)) is disordered. Residues 762–782 (SSRTSTSPSSAAVNATARAFA) show a composition bias toward low complexity. A compositionally biased stretch (polar residues) spans 819 to 828 (TLDSPASPLT). Acidic residues predominate over residues 839–850 (PGDEEQQALDAT).

This sequence belongs to the SSK1 family.

It localises to the cytoplasm. Final receptor of the osmolarity two-component system regulatory system, which controls activity of the sakA mitogen-activated protein kinase (MAPK) pathway in response to changes in the osmolarity of the extracellular environment. Regulates the germination in the airways that drives enhanced disease initiation and inflammation in the lungs. The sequence is that of Response regulator sskA from Aspergillus fumigatus (strain ATCC MYA-4609 / CBS 101355 / FGSC A1100 / Af293) (Neosartorya fumigata).